Here is a 124-residue protein sequence, read N- to C-terminus: Basic leucine zipper transcriptional factor ATF-like (124 aa).

Positions 1–23 are enriched in polar residues; that stretch reads MAQGSDNNDTSYTKSPSPGNKQG. The interval 1–60 is disordered; it reads MAQGSDNNDTSYTKSPSPGNKQGSSDDMRKVMRREKNRIAAQKSRMRQTQKADSLHLESE. The 64-residue stretch at 27-90 folds into the bZIP domain; it reads DMRKVMRREK…KYLSTVLSNH (64 aa). Positions 29 to 51 are basic motif; that stretch reads RKVMRREKNRIAAQKSRMRQTQK. The interval 55–83 is leucine-zipper; it reads LHLESESLEKENAALRKEVKRLTEEAKYL.

It belongs to the bZIP family.

It localises to the nucleus. Its subcellular location is the cytoplasm. AP-1 family transcription factor that controls the differentiation of lineage-specific cells in the immune system: specifically mediates the differentiation of T-helper 17 cells (Th17), follicular T-helper cells (TfH), CD8(+) dendritic cells and class-switch recombination (CSR) in B-cells. The chain is Basic leucine zipper transcriptional factor ATF-like (batf) from Danio rerio (Zebrafish).